A 700-amino-acid chain; its full sequence is Calpain-2 catalytic subunit (700 aa).

Ala-2 is subject to N-acetylalanine. The propeptide at 2–19 (AGIAAKLAKDREAAEGLG) is anchors to the small subunit. The Calpain catalytic domain maps to 45 to 344 (LFQDPSFPAI…YSRLEICNLT (300 aa)). Ca(2+) is bound by residues Ile-89, Gly-91, and Asp-96. Cys-105 is a catalytic residue. Residues Glu-175, Gln-229, and Lys-230 each contribute to the Ca(2+) site. Active-site residues include His-262 and Asn-286. Residues Glu-292, Asp-299, and Glu-323 each coordinate Ca(2+). Residues 345–514 (PDTLTSDTYK…KKADYQAVDD (170 aa)) form a domain III region. A linker region spans residues 515 to 529 (EIEANLEEFDISEDD). Residues 530 to 700 (IDDGFRRLFA…LISWLCFSVL (171 aa)) form a domain IV region. Ca(2+) contacts are provided by Ala-542, Asp-545, Glu-547, Glu-552, Asp-585, Asp-587, Ser-589, Lys-591, Glu-596, Asp-615, Asp-617, Ser-619, Thr-621, Glu-626, Asp-658, and Asn-661. EF-hand domains lie at 572 to 605 (FSIE…TKIQ) and 602 to 637 (TKIQ…AGFK). Residues 667–700 (VRLETLFKIFKQLDPENTGTIELDLISWLCFSVL) form the EF-hand 3 domain.

The protein belongs to the peptidase C2 family. Forms a heterodimer with a small (regulatory) subunit (CAPNS1). Interacts with CPEB3; this leads to cleavage of CPEB3. Interacts with PIDD1 alternative open reading frame protein altPIDD1. The cofactor is Ca(2+). As to expression, ubiquitous.

The protein localises to the cytoplasm. Its subcellular location is the cell membrane. The enzyme catalyses Broad endopeptidase specificity.. Its activity is regulated as follows. Activated by 200-1000 micromolar concentrations of calcium and inhibited by calpastatin. Its function is as follows. Calcium-regulated non-lysosomal thiol-protease which catalyzes limited proteolysis of substrates involved in cytoskeletal remodeling and signal transduction. Proteolytically cleaves MYOC at 'Arg-226'. Proteolytically cleaves CPEB3 following neuronal stimulation which abolishes CPEB3 translational repressor activity, leading to translation of CPEB3 target mRNAs. The sequence is that of Calpain-2 catalytic subunit (CAPN2) from Homo sapiens (Human).